The sequence spans 497 residues: ATP synthase subunit alpha 2 (497 aa).

167 to 174 provides a ligand contact to ATP; sequence GERATGKT.

It belongs to the ATPase alpha/beta chains family. In terms of assembly, F-type ATPases have 2 components, CF(1) - the catalytic core - and CF(0) - the membrane proton channel. CF(1) has five subunits: alpha(3), beta(3), gamma(1), delta(1), epsilon(1). CF(0) has four main subunits: a(1), b(1), b'(1) and c(9-12).

The protein resides in the cell inner membrane. It catalyses the reaction ATP + H2O + 4 H(+)(in) = ADP + phosphate + 5 H(+)(out). In terms of biological role, produces ATP from ADP in the presence of a proton gradient across the membrane. The alpha chain is a regulatory subunit. The chain is ATP synthase subunit alpha 2 from Cereibacter sphaeroides (strain ATCC 17023 / DSM 158 / JCM 6121 / CCUG 31486 / LMG 2827 / NBRC 12203 / NCIMB 8253 / ATH 2.4.1.) (Rhodobacter sphaeroides).